The chain runs to 453 residues: Protein vestigial (453 aa).

Residues 145-279 (AAGHSLHSSH…GGGLAGSGQG (135 aa)) are disordered. Positions 151–177 (HSSHRTHAHSLAHAHTHPHSHTHTHTH) are enriched in basic residues. The span at 178-193 (QTKEEDLIVPRSEAEA) shows a compositional bias: basic and acidic residues. Gly residues-rich tracts occupy residues 227-253 (HGGG…GGTG) and 267-278 (GSGGGGLAGSGQ). Positions 279–335 (GQAQYLSASCVVFTNYSGDTASQVDEHFSRALNYNNKDSKESSSPMSNRNFPPSFWN) are ser-rich sd binding domain.

As to quaternary structure, the Ser-rich protein domain within the C-terminal region interacts with the C-terminus of sd to form a complex which acts as a selector for wing development. Interacts with Dhfr. In terms of tissue distribution, expressed in the developing wing primordia initially along the D/V wing boundary, and by the late third larval instar, maximal expression is seen in cells at the D/V wing disk boundary. Less expression is seen in cells located farther from this boundary.

It is found in the nucleus. Its function is as follows. Involved in determining which thoracic imaginal disk cells will form wings and halteres, perhaps by interacting with other nuclear regulatory proteins. When in combination with scalloped (sd), it acts as a transcriptional activation complex that regulates gene expression in the wing. Binding to sd switches the DNA target selectivity of sd. Required and sufficient for cell proliferation at the dorsal/ventral (D/V) boundary of the wing imaginal disk. Also required for cell proliferation in the wing imaginal disk, mediated via activation of E2f. By interacting with Dhfr, may control genes involved in DNA replication. The polypeptide is Protein vestigial (vg) (Drosophila melanogaster (Fruit fly)).